A 57-amino-acid chain; its full sequence is Large ribosomal subunit protein bL32 (57 aa).

It belongs to the bacterial ribosomal protein bL32 family.

This is Large ribosomal subunit protein bL32 from Staphylococcus saprophyticus subsp. saprophyticus (strain ATCC 15305 / DSM 20229 / NCIMB 8711 / NCTC 7292 / S-41).